A 355-amino-acid chain; its full sequence is Enhancer of mRNA-decapping protein 1 (355 aa).

Disordered regions lie at residues 1-146 (MSSD…VDGM), 210-230 (MSQP…SQPM), and 301-330 (NSTA…KSSQ). The span at 39–49 (AQKQQLPNGEQ) shows a compositional bias: polar residues. A compositionally biased stretch (basic residues) spans 57–67 (KQSRKRGSGRQ). A compositionally biased stretch (polar residues) spans 91 to 110 (SIPSGSAGSESAQKETSAGQ). Positions 123–142 (VPAGGPAGKSSSEPASASSA) are enriched in low complexity.

It belongs to the EDC family.

Its subcellular location is the cytoplasm. In terms of biological role, mRNA-binding protein which stimulates mRNA decapping. This is Enhancer of mRNA-decapping protein 1 (EDC1) from Eremothecium gossypii (strain ATCC 10895 / CBS 109.51 / FGSC 9923 / NRRL Y-1056) (Yeast).